We begin with the raw amino-acid sequence, 887 residues long: Bifunctional uridylyltransferase/uridylyl-removing enzyme (887 aa).

Residues 1-337 (MINTSPLLNY…RLPNYERKIE (337 aa)) form a uridylyltransferase region. Positions 339 to 699 (VNDHFKIVDN…AHRKAAQDAV (361 aa)) are uridylyl-removing. The region spanning 457–579 (VDAHTLLLLR…LGDMEHLDYL (123 aa)) is the HD domain. 2 consecutive ACT domains span residues 700–782 (QIFI…LMQR) and 809–887 (MVEI…ICQH).

It belongs to the GlnD family. It depends on Mg(2+) as a cofactor.

It carries out the reaction [protein-PII]-L-tyrosine + UTP = [protein-PII]-uridylyl-L-tyrosine + diphosphate. The enzyme catalyses [protein-PII]-uridylyl-L-tyrosine + H2O = [protein-PII]-L-tyrosine + UMP + H(+). With respect to regulation, uridylyltransferase (UTase) activity is inhibited by glutamine, while glutamine activates uridylyl-removing (UR) activity. In terms of biological role, modifies, by uridylylation and deuridylylation, the PII regulatory proteins (GlnB and homologs), in response to the nitrogen status of the cell that GlnD senses through the glutamine level. Under low glutamine levels, catalyzes the conversion of the PII proteins and UTP to PII-UMP and PPi, while under higher glutamine levels, GlnD hydrolyzes PII-UMP to PII and UMP (deuridylylation). Thus, controls uridylylation state and activity of the PII proteins, and plays an important role in the regulation of nitrogen assimilation and metabolism. In Acinetobacter baumannii (strain ATCC 17978 / DSM 105126 / CIP 53.77 / LMG 1025 / NCDC KC755 / 5377), this protein is Bifunctional uridylyltransferase/uridylyl-removing enzyme.